The primary structure comprises 200 residues: Elongation factor Ts (200 aa).

The involved in Mg(2+) ion dislocation from EF-Tu stretch occupies residues 80–83; that stretch reads TDFV.

The protein belongs to the EF-Ts family.

It is found in the cytoplasm. In terms of biological role, associates with the EF-Tu.GDP complex and induces the exchange of GDP to GTP. It remains bound to the aminoacyl-tRNA.EF-Tu.GTP complex up to the GTP hydrolysis stage on the ribosome. This Caldanaerobacter subterraneus subsp. tengcongensis (strain DSM 15242 / JCM 11007 / NBRC 100824 / MB4) (Thermoanaerobacter tengcongensis) protein is Elongation factor Ts.